The chain runs to 284 residues: Formamidopyrimidine-DNA glycosylase (284 aa).

The active-site Schiff-base intermediate with DNA is Pro-2. Catalysis depends on Glu-3, which acts as the Proton donor. The active-site Proton donor; for beta-elimination activity is the Lys-58. The DNA site is built by His-97, Arg-120, and Arg-165. An FPG-type zinc finger spans residues 250–284 (FVYDRAGEPCKVCGTPVRQIVQGQRSTFYCTHCQH). Arg-274 functions as the Proton donor; for delta-elimination activity in the catalytic mechanism.

This sequence belongs to the FPG family. In terms of assembly, monomer. It depends on Zn(2+) as a cofactor.

It carries out the reaction Hydrolysis of DNA containing ring-opened 7-methylguanine residues, releasing 2,6-diamino-4-hydroxy-5-(N-methyl)formamidopyrimidine.. The catalysed reaction is 2'-deoxyribonucleotide-(2'-deoxyribose 5'-phosphate)-2'-deoxyribonucleotide-DNA = a 3'-end 2'-deoxyribonucleotide-(2,3-dehydro-2,3-deoxyribose 5'-phosphate)-DNA + a 5'-end 5'-phospho-2'-deoxyribonucleoside-DNA + H(+). Involved in base excision repair of DNA damaged by oxidation or by mutagenic agents. Acts as a DNA glycosylase that recognizes and removes damaged bases. Has a preference for oxidized purines, such as 7,8-dihydro-8-oxoguanine (8-oxoG). Has AP (apurinic/apyrimidinic) lyase activity and introduces nicks in the DNA strand. Cleaves the DNA backbone by beta-delta elimination to generate a single-strand break at the site of the removed base with both 3'- and 5'-phosphates. The polypeptide is Formamidopyrimidine-DNA glycosylase (Cupriavidus pinatubonensis (strain JMP 134 / LMG 1197) (Cupriavidus necator (strain JMP 134))).